We begin with the raw amino-acid sequence, 418 residues long: Serine hydroxymethyltransferase (418 aa).

(6S)-5,6,7,8-tetrahydrofolate-binding positions include Leu121 and 125-127 (GHL). An N6-(pyridoxal phosphate)lysine modification is found at Lys230. 355–357 (SPF) lines the (6S)-5,6,7,8-tetrahydrofolate pocket.

This sequence belongs to the SHMT family. In terms of assembly, homodimer. It depends on pyridoxal 5'-phosphate as a cofactor.

It is found in the cytoplasm. It carries out the reaction (6R)-5,10-methylene-5,6,7,8-tetrahydrofolate + glycine + H2O = (6S)-5,6,7,8-tetrahydrofolate + L-serine. It participates in one-carbon metabolism; tetrahydrofolate interconversion. The protein operates within amino-acid biosynthesis; glycine biosynthesis; glycine from L-serine: step 1/1. In terms of biological role, catalyzes the reversible interconversion of serine and glycine with tetrahydrofolate (THF) serving as the one-carbon carrier. This reaction serves as the major source of one-carbon groups required for the biosynthesis of purines, thymidylate, methionine, and other important biomolecules. Also exhibits THF-independent aldolase activity toward beta-hydroxyamino acids, producing glycine and aldehydes, via a retro-aldol mechanism. This Streptococcus pyogenes serotype M49 (strain NZ131) protein is Serine hydroxymethyltransferase.